Consider the following 212-residue polypeptide: Proteasome subunit beta (212 aa).

A propeptide spans 1 to 11 (removed in mature form; by autocatalysis); sequence MSQEHQDVKTG. Residue threonine 12 is the Nucleophile of the active site.

Belongs to the peptidase T1B family. In terms of assembly, the 20S proteasome core is composed of 14 alpha and 14 beta subunits that assemble into four stacked heptameric rings, resulting in a barrel-shaped structure. The two inner rings, each composed of seven catalytic beta subunits, are sandwiched by two outer rings, each composed of seven alpha subunits. The catalytic chamber with the active sites is on the inside of the barrel. Has a gated structure, the ends of the cylinder being occluded by the N-termini of the alpha-subunits. Is capped at one or both ends by the proteasome regulatory ATPase, PAN.

It is found in the cytoplasm. The catalysed reaction is Cleavage of peptide bonds with very broad specificity.. Its activity is regulated as follows. The formation of the proteasomal ATPase PAN-20S proteasome complex, via the docking of the C-termini of PAN into the intersubunit pockets in the alpha-rings, triggers opening of the gate for substrate entry. Interconversion between the open-gate and close-gate conformations leads to a dynamic regulation of the 20S proteasome proteolysis activity. Component of the proteasome core, a large protease complex with broad specificity involved in protein degradation. In Methanocorpusculum labreanum (strain ATCC 43576 / DSM 4855 / Z), this protein is Proteasome subunit beta.